A 141-amino-acid polypeptide reads, in one-letter code: Large ribosomal subunit protein uL16c (141 aa).

The segment covering 1–17 has biased composition (basic residues); the sequence is MLSPRRTKYRKQHRGRL. A disordered region spans residues 1-20; the sequence is MLSPRRTKYRKQHRGRLKGT.

It belongs to the universal ribosomal protein uL16 family. In terms of assembly, part of the 50S ribosomal subunit.

The protein resides in the plastid. The protein localises to the chloroplast. In Staurastrum punctulatum (Green alga), this protein is Large ribosomal subunit protein uL16c.